The primary structure comprises 336 residues: Phenylalanine--tRNA ligase alpha subunit (336 aa).

Glu-263 provides a ligand contact to Mg(2+).

This sequence belongs to the class-II aminoacyl-tRNA synthetase family. Phe-tRNA synthetase alpha subunit type 1 subfamily. In terms of assembly, tetramer of two alpha and two beta subunits. It depends on Mg(2+) as a cofactor.

It localises to the cytoplasm. It carries out the reaction tRNA(Phe) + L-phenylalanine + ATP = L-phenylalanyl-tRNA(Phe) + AMP + diphosphate + H(+). This Thermosynechococcus vestitus (strain NIES-2133 / IAM M-273 / BP-1) protein is Phenylalanine--tRNA ligase alpha subunit.